Reading from the N-terminus, the 995-residue chain is UPF0182 protein NFA_45260 (995 aa).

7 consecutive transmembrane segments (helical) span residues 18–38, 63–83, 115–135, 176–196, 211–231, 260–280, and 288–308; these read VLLVAAVVLAALLLLGPRFTD, IILFAAVALFVGATVWLALLL, FGIGIPVLLGLLAGLVAQSNW, FVAVVIAFFASLVTHYIFGGL, IQLAVIAGLFVLLKAVAYWFD, KLILLAIAVICAVAFFAGVVL, and MAAALLVLSSVLVGAVYPLVV. Residues 904–957 are disordered; that stretch reads ATPFGGDPATRPQPGTAPPVVDSTQPPADGGTPQPQTTPPPTGSAAKDAAAAEL. Composition is skewed to low complexity over residues 927-938 and 946-955; these read TQPPADGGTPQP and GSAAKDAAAA.

The protein belongs to the UPF0182 family.

It localises to the cell membrane. The chain is UPF0182 protein NFA_45260 from Nocardia farcinica (strain IFM 10152).